We begin with the raw amino-acid sequence, 473 residues long: Glutamate--tRNA ligase (473 aa).

Positions 9-19 (PSPTGELHLGS) match the 'HIGH' region motif. Residues 237–241 (KLSKK) carry the 'KMSKS' region motif. Lysine 240 lines the ATP pocket.

This sequence belongs to the class-I aminoacyl-tRNA synthetase family. Glutamate--tRNA ligase type 1 subfamily. As to quaternary structure, monomer.

It is found in the cytoplasm. The enzyme catalyses tRNA(Glu) + L-glutamate + ATP = L-glutamyl-tRNA(Glu) + AMP + diphosphate. In terms of biological role, catalyzes the attachment of glutamate to tRNA(Glu) in a two-step reaction: glutamate is first activated by ATP to form Glu-AMP and then transferred to the acceptor end of tRNA(Glu). The sequence is that of Glutamate--tRNA ligase from Wigglesworthia glossinidia brevipalpis.